The following is a 1026-amino-acid chain: Multidrug resistance protein MdtC (1026 aa).

Helical transmembrane passes span Ile-15–Ala-35, Glu-333–Leu-353, Leu-360–Cys-380, Leu-387–Leu-407, Val-431–Leu-451, Phe-463–Pro-483, Leu-528–Pro-548, Leu-853–Ser-873, Leu-897–Val-917, Pro-953–Gly-973, and Ile-984–Val-1004.

The protein belongs to the resistance-nodulation-cell division (RND) (TC 2.A.6) family. MdtC subfamily. As to quaternary structure, part of a tripartite efflux system composed of MdtA, MdtB and MdtC. MdtC forms a heteromultimer with MdtB.

Its subcellular location is the cell inner membrane. The protein is Multidrug resistance protein MdtC of Salmonella arizonae (strain ATCC BAA-731 / CDC346-86 / RSK2980).